The primary structure comprises 53 residues: ComX pheromone (53 aa).

Residues 1 to 46 (MQEMVGYLIKYPNVLREVMEGNACLLGVDKDQSECIINGFKGLEIY) constitute a propeptide that is removed on maturation. Residue Trp51 is the site of 3'-geranyl-2',N2-cyclotryptophan attachment.

Interacts directly with the sensor histidine kinase ComP and stimulates its activity. In terms of processing, trp-51 is modified by geranylation, which is essential for activity. Modified by the tryptophan prenyltransferase ComQ before export to the extracellular environment. The type of isoprenyl derivative differs among the different pherotypes and depends on ComX primary sequence.

The protein localises to the secreted. Its function is as follows. Part of a major quorum-sensing system that regulates the development of genetic competence. Acts through the activation of the two-component regulatory system ComP/ComA composed of a sensor histidine kinase, ComP, and a response regulator, ComA. This Bacillus mojavensis protein is ComX pheromone.